A 554-amino-acid polypeptide reads, in one-letter code: Potassium-transporting ATPase potassium-binding subunit (554 aa).

12 consecutive transmembrane segments (helical) span residues 1-21, 59-79, 131-151, 174-194, 246-266, 279-299, 323-343, 352-372, 375-395, 412-432, 481-501, and 525-545; these read MSSQ…LALA, WPAY…FLYL, GLAV…VALV, VRIL…AGAI, PNPL…FALT, GYAI…LMMW, FGIA…TGAV, GFGG…PGGV, GLYG…LMVG, FAAC…AVAM, IGIA…ALAG, and GLLV…ALAL.

Belongs to the KdpA family. The system is composed of three essential subunits: KdpA, KdpB and KdpC.

It localises to the cell membrane. Its function is as follows. Part of the high-affinity ATP-driven potassium transport (or Kdp) system, which catalyzes the hydrolysis of ATP coupled with the electrogenic transport of potassium into the cytoplasm. This subunit binds the extracellular potassium ions and delivers the ions to the membrane domain of KdpB through an intramembrane tunnel. This is Potassium-transporting ATPase potassium-binding subunit from Streptomyces griseus subsp. griseus (strain JCM 4626 / CBS 651.72 / NBRC 13350 / KCC S-0626 / ISP 5235).